The chain runs to 305 residues: ATP synthase gamma chain (305 aa).

Belongs to the ATPase gamma chain family. In terms of assembly, F-type ATPases have 2 components, CF(1) - the catalytic core - and CF(0) - the membrane proton channel. CF(1) has five subunits: alpha(3), beta(3), gamma(1), delta(1), epsilon(1). CF(0) has three main subunits: a, b and c.

The protein resides in the cell membrane. In terms of biological role, produces ATP from ADP in the presence of a proton gradient across the membrane. The gamma chain is believed to be important in regulating ATPase activity and the flow of protons through the CF(0) complex. The sequence is that of ATP synthase gamma chain from Streptomyces griseus subsp. griseus (strain JCM 4626 / CBS 651.72 / NBRC 13350 / KCC S-0626 / ISP 5235).